The primary structure comprises 329 residues: NADH-quinone oxidoreductase subunit H (329 aa).

9 helical membrane passes run 9–29, 42–62, 75–95, 117–137, 154–174, 188–208, 238–258, 269–291, and 309–329; these read LIKI…ATYI, GPSY…IKLF, LIFT…MAPI, IGFL…ILAG, IQLL…LMVV, GGFL…FLIA, LKWG…SFVI, WGFI…LSMW, and WKIM…IILI.

Belongs to the complex I subunit 1 family. NDH-1 is composed of 14 different subunits. Subunits NuoA, H, J, K, L, M, N constitute the membrane sector of the complex.

The protein localises to the cell inner membrane. The enzyme catalyses a quinone + NADH + 5 H(+)(in) = a quinol + NAD(+) + 4 H(+)(out). In terms of biological role, NDH-1 shuttles electrons from NADH, via FMN and iron-sulfur (Fe-S) centers, to quinones in the respiratory chain. The immediate electron acceptor for the enzyme in this species is believed to be ubiquinone. Couples the redox reaction to proton translocation (for every two electrons transferred, four hydrogen ions are translocated across the cytoplasmic membrane), and thus conserves the redox energy in a proton gradient. This subunit may bind ubiquinone. The polypeptide is NADH-quinone oxidoreductase subunit H (Helicobacter acinonychis (strain Sheeba)).